Here is a 195-residue protein sequence, read N- to C-terminus: Peptidyl-tRNA hydrolase (195 aa).

Tyrosine 18 serves as a coordination point for tRNA. Residue histidine 23 is the Proton acceptor of the active site. TRNA contacts are provided by phenylalanine 69, asparagine 71, and asparagine 117.

Belongs to the PTH family. In terms of assembly, monomer.

Its subcellular location is the cytoplasm. It catalyses the reaction an N-acyl-L-alpha-aminoacyl-tRNA + H2O = an N-acyl-L-amino acid + a tRNA + H(+). Functionally, hydrolyzes ribosome-free peptidyl-tRNAs (with 1 or more amino acids incorporated), which drop off the ribosome during protein synthesis, or as a result of ribosome stalling. Its function is as follows. Catalyzes the release of premature peptidyl moieties from peptidyl-tRNA molecules trapped in stalled 50S ribosomal subunits, and thus maintains levels of free tRNAs and 50S ribosomes. This chain is Peptidyl-tRNA hydrolase, found in Alcanivorax borkumensis (strain ATCC 700651 / DSM 11573 / NCIMB 13689 / SK2).